The following is a 315-amino-acid chain: Glutathione synthetase (315 aa).

One can recognise an ATP-grasp domain in the interval Lys125–Glu310. Residue His151–Gly207 participates in ATP binding. The Mg(2+) site is built by Glu281 and Asn283.

The protein belongs to the prokaryotic GSH synthase family. It depends on Mg(2+) as a cofactor. Requires Mn(2+) as cofactor.

The catalysed reaction is gamma-L-glutamyl-L-cysteine + glycine + ATP = glutathione + ADP + phosphate + H(+). Its pathway is sulfur metabolism; glutathione biosynthesis; glutathione from L-cysteine and L-glutamate: step 2/2. The protein is Glutathione synthetase of Shewanella oneidensis (strain ATCC 700550 / JCM 31522 / CIP 106686 / LMG 19005 / NCIMB 14063 / MR-1).